Consider the following 306-residue polypeptide: Serine/threonine-protein phosphatase PP2A-1 catalytic subunit (306 aa).

Asp-54, His-56, Asp-82, and Asn-114 together coordinate Mn(2+). His-115 (proton donor) is an active-site residue. Mn(2+) contacts are provided by His-164 and His-238. Leu-306 carries the post-translational modification Leucine methyl ester.

Belongs to the PPP phosphatase family. PP-2A subfamily. In terms of assembly, PP2A consists of a common heterodimeric core enzyme, composed of a 36 kDa catalytic subunit (subunit C) and a 65 kDa constant regulatory subunit (subunit A), that associates with a variety of regulatory subunits such as subunits B (the R2/B/PR55/B55, R3/B''/PR72/PR130/PR59 and R5/B'/B56 families). Interacts with TAF12B. Interacts with SRK2E/OST1. Interacts with TAP46. Requires Mn(2+) as cofactor. Reversibly methyl esterified on Leu-306 by leucine carboxyl methyltransferase 1 (LCMT1) and pectin methylesterase 1 (PME1). Carboxyl methylation influences the affinity of the catalytic subunit for the different regulatory subunits, thereby modulating the PP2A holoenzyme's substrate specificity, enzyme activity and cellular localization. In terms of processing, phosphorylation of either threonine (by autophosphorylation-activated protein kinase) or tyrosine results in inactivation of the phosphatase. Auto-dephosphorylation has been suggested as a mechanism for reactivation.

Its subcellular location is the cytoplasm. The catalysed reaction is O-phospho-L-seryl-[protein] + H2O = L-seryl-[protein] + phosphate. The enzyme catalyses O-phospho-L-threonyl-[protein] + H2O = L-threonyl-[protein] + phosphate. The protein is Serine/threonine-protein phosphatase PP2A-1 catalytic subunit of Arabidopsis thaliana (Mouse-ear cress).